The sequence spans 302 residues: tRNA pseudouridine synthase B (302 aa).

Residue Asp-45 is the Nucleophile of the active site.

The protein belongs to the pseudouridine synthase TruB family. Type 1 subfamily.

It catalyses the reaction uridine(55) in tRNA = pseudouridine(55) in tRNA. Its function is as follows. Responsible for synthesis of pseudouridine from uracil-55 in the psi GC loop of transfer RNAs. This chain is tRNA pseudouridine synthase B, found in Francisella tularensis subsp. holarctica (strain FTNF002-00 / FTA).